Reading from the N-terminus, the 249-residue chain is Pleckstrin homology domain-containing family F member 2 (249 aa).

Residues 35–131 form the PH domain; it reads VLIGEGVLTK…WMNHINKCVS (97 aa). The FYVE-type zinc-finger motif lies at 152–212; sequence DSEATVCMRC…ICDSCYDLLS (61 aa). Zn(2+) contacts are provided by C158, C161, C175, C178, C183, C186, C204, and C207. The span at 219-232 shows a compositional bias: polar residues; that stretch reads CQSTRSDSYSQSPK. Positions 219-249 are disordered; it reads CQSTRSDSYSQSPKSSLNDASDDDDDEDSSD. The segment covering 238-249 has biased composition (acidic residues); that stretch reads ASDDDDDEDSSD.

Its subcellular location is the early endosome membrane. It localises to the endoplasmic reticulum. Its function is as follows. May play a role in early endosome fusion upstream of RAB5, hence regulating receptor trafficking and fluid-phase transport. Enhances cellular sensitivity to TNF-induced apoptosis. The chain is Pleckstrin homology domain-containing family F member 2 (PLEKHF2) from Gallus gallus (Chicken).